A 390-amino-acid chain; its full sequence is Large ribosomal subunit protein mL44 (390 aa).

A mitochondrion-targeting transit peptide spans 1–59 (MGIVLKRAIAAGMKPFPNSTWHWSRTIRPFSQHLSSTCFLQQSSRFTSKRYLHLSTLTQ). The RNase III domain occupies 139 to 205 (AFVNTVPTNK…LAHIAKYWGI (67 aa)). One can recognise a DRBM domain in the interval 302–372 (QPTRELAMLC…ATDALMKWYC (71 aa)).

The protein belongs to the ribonuclease III family. Mitochondrion-specific ribosomal protein mL44 subfamily. As to quaternary structure, component of the mitochondrial large ribosomal subunit (mt-LSU). Mature yeast 74S mitochondrial ribosomes consist of a small (37S) and a large (54S) subunit. The 37S small subunit contains a 15S ribosomal RNA (15S mt-rRNA) and 34 different proteins. The 54S large subunit contains a 21S rRNA (21S mt-rRNA) and 46 different proteins. mL44 forms a heterodimer with mL57 and stabilizes rRNA expansion segments 1/2 at a membrane-facing protuberance close to the point of attachment of the ribosome to the translocon in the membrane.

Its subcellular location is the mitochondrion. Component of the mitochondrial ribosome (mitoribosome), a dedicated translation machinery responsible for the synthesis of mitochondrial genome-encoded proteins, including at least some of the essential transmembrane subunits of the mitochondrial respiratory chain. The mitoribosomes are attached to the mitochondrial inner membrane and translation products are cotranslationally integrated into the membrane. This Saccharomyces cerevisiae (strain ATCC 204508 / S288c) (Baker's yeast) protein is Large ribosomal subunit protein mL44 (MRPL3).